The primary structure comprises 264 residues: tRNA (guanine-N(1)-)-methyltransferase (264 aa).

S-adenosyl-L-methionine contacts are provided by residues glycine 116 and 136-141 (VGDFVL).

This sequence belongs to the RNA methyltransferase TrmD family. In terms of assembly, homodimer.

It is found in the cytoplasm. The catalysed reaction is guanosine(37) in tRNA + S-adenosyl-L-methionine = N(1)-methylguanosine(37) in tRNA + S-adenosyl-L-homocysteine + H(+). In terms of biological role, specifically methylates guanosine-37 in various tRNAs. In Koribacter versatilis (strain Ellin345), this protein is tRNA (guanine-N(1)-)-methyltransferase.